The following is a 691-amino-acid chain: POU domain, class 6, transcription factor 2 (691 aa).

Disordered regions lie at residues 1-61, 188-297, and 435-461; these read MIAG…RGNT, QQQQ…LQLV, and GQAA…SALS. The segment covering 17–28 has biased composition (basic and acidic residues); the sequence is MNAELRGEDKAA. 2 stretches are compositionally biased toward low complexity: residues 188–197 and 206–216; these read QQQQQQQQQQ and QHPQPASQAPP. Pro residues predominate over residues 217–237; the sequence is QSQPTPPHQPPPASQQLPAPP. Low complexity predominate over residues 238 to 272; that stretch reads AQLEQATQPQQHQPHSHPQNQTQNQPSPTQQSSSP. The segment covering 437–447 has biased composition (polar residues); it reads AATSHSPVRQA. Residues 448–458 show a composition bias toward low complexity; the sequence is SSSSSSSSSSS. Residues 476–586 enclose the POU-specific domain; the sequence is VDGVNLEEIR…VLERWMAEAE (111 aa). The segment at residues 607–666 is a DNA-binding region (homeobox); the sequence is KRKRRTSFTPQALEILNAHFEKNTHPSGQEMTEIAEKLNYDREVVRVWFCNKRQALKNTI. Residues 670–691 form a disordered region; sequence KQHEPTSAAPLEPLADSPEENC.

The protein belongs to the POU transcription factor family. Class-6 subfamily. Expressed in kidney, heart, muscle, spleen and ovary, but not in lung.

The protein resides in the nucleus. Functionally, probable transcription factor likely to be involved in early steps in the differentiation of amacrine and ganglion cells. Recognizes and binds to the DNA sequence 5'-ATGCAAAT-3'. This Mus musculus (Mouse) protein is POU domain, class 6, transcription factor 2 (Pou6f2).